The primary structure comprises 819 residues: Regulator of G-protein signaling rgs-7 (819 aa).

The span at 1–11 (MSDEDADEYDD) shows a compositional bias: acidic residues. Disordered stretches follow at residues 1–51 (MSDE…EMLW), 112–135 (GDDS…GYGS), and 149–259 (SSTY…HNNE). The segment covering 32–44 (YQDTTESTGPSEA) has biased composition (polar residues). Over residues 112–124 (GDDSSFRSRDRFV) the composition is skewed to basic and acidic residues. Positions 149-166 (SSTYSSSSEAHRLSSLRA) are enriched in low complexity. Polar residues predominate over residues 173 to 185 (QLTSTTTSFQPLS). Over residues 213–223 (RMYRKNPKYRR) the composition is skewed to basic residues. The segment covering 234–259 (SRLEESTSQESERAVTPESWMEHNNE) has biased composition (basic and acidic residues). One can recognise a C2 domain in the interval 290-429 (KHKDIRGIIF…KASQVVGDPF (140 aa)). Disordered regions lie at residues 515-594 (YRST…DDNG) and 617-640 (FTFS…EEDK). 3 stretches are compositionally biased toward polar residues: residues 517–533 (STGS…NLLD), 559–568 (PSITTTTSEN), and 617–632 (FTFS…NLRQ). Residues 682-800 (SFESLLNNKF…LRDRLFLDLL (119 aa)) enclose the RGS domain.

In terms of assembly, interacts with egl-30.

In terms of biological role, inhibits signal transduction by increasing the GTPase activity of G protein alpha subunit egl-30 (G-alpha(q)), thereby driving it into its inactive GDP-bound form. May organize egl-30 into a stable multiprotein signaling complex, and thereby persistently inhibit egl-30 when triggered by calcium or phospholipids. The sequence is that of Regulator of G-protein signaling rgs-7 (rgs-7) from Caenorhabditis elegans.